Here is a 465-residue protein sequence, read N- to C-terminus: Cysteine--tRNA ligase (465 aa).

C27 is a Zn(2+) binding site. Residues 29 to 39 (PTVYDDAHLGH) carry the 'HIGH' region motif. The Zn(2+) site is built by C207, H237, and E241. A 'KMSKS' region motif is present at residues 269–273 (KMSKS). K272 lines the ATP pocket.

This sequence belongs to the class-I aminoacyl-tRNA synthetase family. In terms of assembly, monomer. It depends on Zn(2+) as a cofactor.

It localises to the cytoplasm. The enzyme catalyses tRNA(Cys) + L-cysteine + ATP = L-cysteinyl-tRNA(Cys) + AMP + diphosphate. This chain is Cysteine--tRNA ligase, found in Helicobacter pylori (strain Shi470).